The following is a 1042-amino-acid chain: Diacylglycerol lipase-alpha (1042 aa).

Residues 1 to 22 are Cytoplasmic-facing; the sequence is MPGIVVFRRRWSVGSDDLVLPA. A helical membrane pass occupies residues 23 to 43; the sequence is IFLFLLHTTWFVILSVVLFGL. Topologically, residues 44 to 60 are extracellular; the sequence is VYNPHEACSLNLVDHGR. The chain crosses the membrane as a helical span at residues 61–81; it reads GYLGILLSCMIAEMAIIWLSM. The Cytoplasmic segment spans residues 82-101; it reads RGGILYTEPRDSMQYVLYVR. A helical membrane pass occupies residues 102 to 122; that stretch reads LAILVIEFIYAIVGIVWLTQY. Residues 123 to 136 are Extracellular-facing; that stretch reads YTSCNDLTAKNVTL. The N-linked (GlcNAc...) asparagine glycan is linked to asparagine 133. Residues 137–157 traverse the membrane as a helical segment; that stretch reads GMVVCNWVVILSVCITVLCVF. Residues 158–1042 lie on the Cytoplasmic side of the membrane; the sequence is DPTGRTFVKL…KQDELVISAR (885 aa). Residues serine 472 and aspartate 524 each act as charge relay system in the active site. Serine 727, serine 729, serine 732, serine 743, serine 782, serine 784, serine 806, serine 808, serine 833, serine 847, and serine 952 each carry phosphoserine. Residues 846 to 903 are disordered; sequence LSKHSQDTQPLEAALGSGGVTPERPPSAAANDEEEEVGGGGGGPASRGELALHNGRLG. Residues 1014–1042 are disordered; sequence LAADKIRTSTPTGHGASPAKQDELVISAR. Position 1023 is a phosphothreonine (threonine 1023).

This sequence belongs to the AB hydrolase superfamily. Lipase family. As to quaternary structure, interacts (via C-terminal) with CAMK2A; leading to the phosphorylation and inhibition of DAGLA enzymatic activity. Interacts (via PPXXF motif) with HOMER1 and HOMER2; this interaction is required for DAGLA membrane localization. Ca(2+) is required as a cofactor. Post-translationally, phosphorylated at Ser-782 and Ser-808 by CAMK2A; phosphorylation by CAMK2A inhibits diacylglycerol lipase activity. In terms of tissue distribution, highly expressed in brain and pancreas.

It localises to the cell membrane. It is found in the postsynaptic density membrane. Its subcellular location is the early endosome membrane. The protein localises to the cell projection. The protein resides in the dendritic spine membrane. It catalyses the reaction a 1,2-diacyl-sn-glycerol + H2O = a 2-acylglycerol + a fatty acid + H(+). The enzyme catalyses 1-octadecanoyl-2-(5Z,8Z,11Z,14Z-eicosatetraenoyl)-sn-glycerol + H2O = 2-(5Z,8Z,11Z,14Z-eicosatetraenoyl)-glycerol + octadecanoate + H(+). The catalysed reaction is 1,2-di-(9Z-octadecenoyl)-sn-glycerol + H2O = 2-(9Z-octadecenoyl)-glycerol + (9Z)-octadecenoate + H(+). It carries out the reaction 1-(9Z-octadecenoyl)-2-(5Z,8Z,11Z,14Z-eicosatetraenoyl)-sn-glycerol + H2O = 2-(5Z,8Z,11Z,14Z-eicosatetraenoyl)-glycerol + (9Z)-octadecenoate + H(+). It catalyses the reaction 1-(9Z-octadecenoyl)-2-octadecanoyl-sn-glycerol + H2O = 2-octadecanoylglycerol + (9Z)-octadecenoate + H(+). The enzyme catalyses 1-(9Z-octadecenoyl)-2-(9Z,12Z-octadecadienoyl)-sn-glycerol + H2O = 2-(9Z,12Z-octadecadienoyl)-glycerol + (9Z)-octadecenoate + H(+). The catalysed reaction is 1-(9Z-octadecenoyl)-2-O-(5Z,8Z,11Z,14Z-eicosatetraenyl)-sn-glycerol + H2O = 2-O-(5Z,8Z,11Z,14Z)-eicosatetraenylglycerol + (9Z)-octadecenoate + H(+). Inhibited by 1,2,3-triazole urea covalent inhibitors KT172, DH376 and DO34. Inhibited by p-hydroxy-mercuri-benzoate and HgCl(2), but not to PMSF. Also inhibited by RHC80267. Diacylglycerol lipase activity is inhibited by the phosphorylation of Ser-782 and Ser-808 by CAMK2A. Serine hydrolase that hydrolyzes arachidonic acid-esterified diacylglycerols (DAGs) to produce the principal endocannabinoid, 2-arachidonoylglycerol (2-AG). Preferentially hydrolyzes sn-1 fatty acids from diacylglycerols (DAG) that contain arachidonic acid (AA) esterified at the sn-2 position to biosynthesize 2-AG. Has negligible activity against other lipids including monoacylglycerols and phospholipids. Plays a key role in regulating 2-AG signaling in the central nervous system (CNS). Regulates 2-AG involved in retrograde suppression at central synapses. Supports axonal growth during development and adult neurogenesis. Plays a role for eCB signaling in the physiological regulation of anxiety and depressive behaviors. Also regulates neuroinflammatory responses in the brain, in particular, LPS-induced microglial activation. The chain is Diacylglycerol lipase-alpha (DAGLA) from Homo sapiens (Human).